The sequence spans 789 residues: Larval serum protein 1 beta chain (789 aa).

Positions 1–16 (MKIAIALLACLGLAAA) are cleaved as a signal peptide.

This sequence belongs to the hemocyanin family. As to quaternary structure, heterohexamer, composed of three subunits, alpha, beta and gamma. As to expression, larval hemolymph.

It is found in the secreted. Its subcellular location is the extracellular space. Its function is as follows. Larval storage protein (LSP) which may serve as a store of amino acids for synthesis of adult proteins. This Drosophila melanogaster (Fruit fly) protein is Larval serum protein 1 beta chain (Lsp1beta).